We begin with the raw amino-acid sequence, 242 residues long: Probable transcriptional regulatory protein Bphy_2064 (242 aa).

It belongs to the TACO1 family.

It localises to the cytoplasm. The sequence is that of Probable transcriptional regulatory protein Bphy_2064 from Paraburkholderia phymatum (strain DSM 17167 / CIP 108236 / LMG 21445 / STM815) (Burkholderia phymatum).